The sequence spans 271 residues: RELT-like protein 1 (271 aa).

The N-terminal stretch at 1 to 23 (MAPRGLPGSAVLAAAVFVGGAVS) is a signal peptide. Residues 24–57 (SPLVRSDHSGSHPLPSKTETTPSPTNNNGNGHPE) are Extracellular-facing. Positions 27 to 52 (VRSDHSGSHPLPSKTETTPSPTNNNG) are disordered. Low complexity predominate over residues 36 to 52 (PLPSKTETTPSPTNNNG). The chain crosses the membrane as a helical span at residues 58–78 (YIAYALVPVFFVMGLFGVLIC). The Cytoplasmic segment spans residues 79-271 (HLLKKKGYRC…PVKRQQSDSE (193 aa)). 2 positions are modified to phosphoserine: Ser-109 and Ser-114. 2 disordered regions span residues 144–168 (CDPE…LSPG) and 231–271 (TKVE…SDSE). Positions 155–165 (PGSPPVSPGPL) are enriched in pro residues. Over residues 231–244 (TKVEPKSNQKERRS) the composition is skewed to basic and acidic residues. A phosphoserine mark is found at Ser-244 and Ser-247.

It belongs to the RELT family. Interacts with RELT, RELL2, OXSR1 and PLSCR1.

The protein resides in the cell membrane. In terms of biological role, induces activation of MAPK14/p38 cascade, when overexpressed. Induces apoptosis, when overexpressed. The polypeptide is RELT-like protein 1 (RELL1) (Bos taurus (Bovine)).